The chain runs to 111 residues: UPF0122 protein CKR_1296 (111 aa).

It belongs to the UPF0122 family.

Functionally, might take part in the signal recognition particle (SRP) pathway. This is inferred from the conservation of its genetic proximity to ftsY/ffh. May be a regulatory protein. The chain is UPF0122 protein CKR_1296 from Clostridium kluyveri (strain NBRC 12016).